A 397-amino-acid polypeptide reads, in one-letter code: Elongation factor Tu (397 aa).

The region spanning 10–206 is the tr-type G domain; that stretch reads KPHVNIGTIG…AVDENVPDPE (197 aa). A G1 region spans residues 19 to 26; the sequence is GHVDHGKT. 19-26 is a binding site for GTP; sequence GHVDHGKT. Threonine 26 serves as a coordination point for Mg(2+). Residues 62 to 66 form a G2 region; the sequence is GITIQ. The segment at 83-86 is G3; that stretch reads DAPG. GTP is bound by residues 83 to 87 and 138 to 141; these read DAPGH and NKAD. Positions 138–141 are G4; it reads NKAD. Residues 176-178 are G5; that stretch reads SAL.

The protein belongs to the TRAFAC class translation factor GTPase superfamily. Classic translation factor GTPase family. EF-Tu/EF-1A subfamily. Monomer.

Its subcellular location is the cytoplasm. The catalysed reaction is GTP + H2O = GDP + phosphate + H(+). In terms of biological role, GTP hydrolase that promotes the GTP-dependent binding of aminoacyl-tRNA to the A-site of ribosomes during protein biosynthesis. This is Elongation factor Tu from Saccharopolyspora erythraea (strain ATCC 11635 / DSM 40517 / JCM 4748 / NBRC 13426 / NCIMB 8594 / NRRL 2338).